A 246-amino-acid chain; its full sequence is Complement C1q tumor necrosis factor-related protein 3 (246 aa).

The signal sequence occupies residues 1–22 (MLGRQRIWWHLLPLLFLPFCLC). A Collagen-like domain is found at 51–113 (GYQGPPGPPG…KGEKGYPGVP (63 aa)). Residues 53–112 (QGPPGPPGPPGIPGNHGNNGNNGATGHEGAKGEKGDKGDLGPRGERGQHGPKGEKGYPGV) are disordered. Positions 55–64 (PPGPPGPPGI) are enriched in pro residues. Positions 65 to 74 (PGNHGNNGNN) are enriched in low complexity. Over residues 80–107 (EGAKGEKGDKGDLGPRGERGQHGPKGEK) the composition is skewed to basic and acidic residues. Residues 113 to 246 (PPELQIAFMA…FAGFLLFETK (134 aa)) enclose the C1q domain.

Its subcellular location is the secreted. This Mus musculus (Mouse) protein is Complement C1q tumor necrosis factor-related protein 3 (C1qtnf3).